The primary structure comprises 263 residues: Granzyme K (263 aa).

The N-terminal stretch at Met-1–Cys-21 is a signal peptide. A propeptide spans Phe-22–Glu-25 (activation peptide). Residues Ile-26–Ala-258 form the Peptidase S1 domain. Cys-51 and Cys-67 are joined by a disulfide. Active-site charge relay system residues include His-66 and Asp-115. Disulfide bonds link Cys-148/Cys-219, Cys-180/Cys-198, and Cys-209/Cys-233. The Charge relay system role is filled by Ser-213.

Belongs to the peptidase S1 family. Granzyme subfamily.

It localises to the cytoplasmic granule. The polypeptide is Granzyme K (Gzmk) (Mus musculus (Mouse)).